A 240-amino-acid chain; its full sequence is Orotidine 5'-phosphate decarboxylase (240 aa).

Substrate contacts are provided by residues Asp-15, Lys-37, 64–73, Thr-127, Arg-188, Gln-197, Gly-217, and Arg-218; that span reads DLKYHDIPNT. Catalysis depends on Lys-66, which acts as the Proton donor.

It belongs to the OMP decarboxylase family. Type 1 subfamily. In terms of assembly, homodimer.

The enzyme catalyses orotidine 5'-phosphate + H(+) = UMP + CO2. The protein operates within pyrimidine metabolism; UMP biosynthesis via de novo pathway; UMP from orotate: step 2/2. Its function is as follows. Catalyzes the decarboxylation of orotidine 5'-monophosphate (OMP) to uridine 5'-monophosphate (UMP). The polypeptide is Orotidine 5'-phosphate decarboxylase (Citrifermentans bemidjiense (strain ATCC BAA-1014 / DSM 16622 / JCM 12645 / Bem) (Geobacter bemidjiensis)).